The primary structure comprises 494 residues: NADPH:adrenodoxin oxidoreductase, mitochondrial (494 aa).

A mitochondrion-targeting transit peptide spans 1 to 34; sequence MAPRCWRWWSWSAWPGVRPLPSRSTPTPGFCKKF. Residues Ala51, Glu72, Leu80, and Val116 each contribute to the FAD site. Residues 187–190, 231–232, and Glu243 contribute to the NADP(+) site; these read QGNV and RR. The residue at position 313 (Ser313) is a Phosphoserine. FAD contacts are provided by residues Trp401 and 408–410; that span reads GVI. Position 408 (Gly408) interacts with NADP(+).

This sequence belongs to the ferredoxin--NADP reductase type 1 family. Monomer. Interacts directly with FDX1. FAD serves as cofactor.

The protein localises to the mitochondrion inner membrane. The enzyme catalyses 2 reduced [adrenodoxin] + NADP(+) + H(+) = 2 oxidized [adrenodoxin] + NADPH. It carries out the reaction 2 reduced [2Fe-2S]-[ferredoxin] + NADP(+) + H(+) = 2 oxidized [2Fe-2S]-[ferredoxin] + NADPH. Its pathway is steroid metabolism; cholesterol metabolism. Its function is as follows. Serves as the first electron transfer protein in all the mitochondrial P450 systems including cholesterol side chain cleavage in all steroidogenic tissues, steroid 11-beta hydroxylation in the adrenal cortex, 25-OH-vitamin D3-24 hydroxylation in the kidney, and sterol C-27 hydroxylation in the liver. Also acts as a ferredoxin--NADP(+) reductase essential for coenzyme Q biosynthesis: together with FDX2, transfers the electrons required for the hydroxylation reaction performed by COQ6. The chain is NADPH:adrenodoxin oxidoreductase, mitochondrial (Fdxr) from Rattus norvegicus (Rat).